Here is an 838-residue protein sequence, read N- to C-terminus: Adenylate cyclase (838 aa).

Positions Met-1–Val-541 are catalytic. The segment at Glu-547 to Ser-838 is regulatory.

It belongs to the adenylyl cyclase class-1 family.

Its subcellular location is the cytoplasm. It catalyses the reaction ATP = 3',5'-cyclic AMP + diphosphate. This chain is Adenylate cyclase (cya), found in Pasteurella multocida (strain Pm70).